The chain runs to 149 residues: Ribonuclease pancreatic (149 aa).

Positions 1–25 (MGLENSLILFSLLVLVLGWVQPSLG) are cleaved as a signal peptide. Residues 25–62 (GKESSPDKFKRQHMDTEGSSKSSPTYCNQMRSPQEMTK) are disordered. The segment covering 28 to 42 (SSPDKFKRQHMDTEG) has biased composition (basic and acidic residues). Substrate is bound by residues Lys-32 and Arg-35. His-37 (proton acceptor) is an active-site residue. Over residues 43–61 (SSKSSPTYCNQMRSPQEMT) the composition is skewed to polar residues. Intrachain disulfides connect Cys-51-Cys-109, Cys-65-Cys-120, Cys-83-Cys-135, and Cys-90-Cys-97. Residues 66–70 (KPVNT) and Lys-91 each bind substrate. His-144 serves as the catalytic Proton donor.

Belongs to the pancreatic ribonuclease family. In terms of assembly, monomer. Interacts with and forms tight 1:1 complexes with RNH1. Dimerization of two such complexes may occur. Interaction with RNH1 inhibits this protein.

It is found in the secreted. The enzyme catalyses an [RNA] containing cytidine + H2O = an [RNA]-3'-cytidine-3'-phosphate + a 5'-hydroxy-ribonucleotide-3'-[RNA].. The catalysed reaction is an [RNA] containing uridine + H2O = an [RNA]-3'-uridine-3'-phosphate + a 5'-hydroxy-ribonucleotide-3'-[RNA].. Endonuclease that catalyzes the cleavage of RNA on the 3' side of pyrimidine nucleotides. Acts on single-stranded and double-stranded RNA. This is Ribonuclease pancreatic (RNASE1) from Sundamys muelleri (Mueller's giant sunda rat).